We begin with the raw amino-acid sequence, 140 residues long: Small ribosomal subunit protein eS12 (140 aa).

It belongs to the eukaryotic ribosomal protein eS12 family. In terms of assembly, part of the small subunit (SSU) processome, composed of more than 70 proteins and the RNA chaperone small nucleolar RNA (snoRNA) U3. Subunit of the 40S ribosomal complex.

The protein localises to the nucleus. It is found in the nucleolus. Part of the small subunit (SSU) processome, first precursor of the small eukaryotic ribosomal subunit. During the assembly of the SSU processome in the nucleolus, many ribosome biogenesis factors, an RNA chaperone and ribosomal proteins associate with the nascent pre-rRNA and work in concert to generate RNA folding, modifications, rearrangements and cleavage as well as targeted degradation of pre-ribosomal RNA by the RNA exosome. Subunit of the 40S ribosomal complex. Involved in cold-warm shock-induced translocation of the RNA exosome components from the nucleolus to nucleoplasm. This is Small ribosomal subunit protein eS12 (rps-12) from Caenorhabditis elegans.